The primary structure comprises 353 residues: D-alanine--D-alanine ligase (353 aa).

One can recognise an ATP-grasp domain in the interval 141 to 349; the sequence is KAAFAAAGLP…LEELVSQLVI (209 aa). 176–231 is a binding site for ATP; that stretch reads EAKLKYPCFVKPANLGSSVGISKAQNRNELLIGLDKAASLDRRIVVEQGVSARELE. Mg(2+) is bound by residues Asp302, Glu316, and Asn318.

It belongs to the D-alanine--D-alanine ligase family. Requires Mg(2+) as cofactor. Mn(2+) serves as cofactor.

The protein localises to the cytoplasm. The catalysed reaction is 2 D-alanine + ATP = D-alanyl-D-alanine + ADP + phosphate + H(+). It functions in the pathway cell wall biogenesis; peptidoglycan biosynthesis. Functionally, cell wall formation. This chain is D-alanine--D-alanine ligase, found in Prochlorococcus marinus (strain MIT 9303).